The primary structure comprises 514 residues: MYKNQLQELAQRSCFNLPAYTCLREGPDHAPRFKAAVNFNGEQFESPGFFTTLRQAEHAAAEVALAALARRGPSYSLAARILDETGVYKNLLQEVAQRVGAPLPSYTTERSGLGHLPVFTCTVELAGITFTGDPAKNKKQAEKNAASAAWSSLRQLVRQEASSSNEPESNDEQEQIRIARALLNYRLKEKMAMANNPHASPFPKKFPMQPERRTAFPQSSHSSYSKILPLFRPKSNSRSRPESPAASDAASQTPFRPTESPNPRSRFPAAEAAPYVPVGHFRMPCHSMAPPVTVRTSIPVFSAPPLPPPGARTQQLPPLMSHPPPIRMASPVRIRPAPPLFTPSAVQGPKPMMPVQIKDVQHQQIKETRSPVMPVQVKDAQNQLLKGSLSPVIPVQIKDVQSQPPKEALSPAIPVQIKDVQLQPRNEPVSIGKGVVPLPAIRPPVKVEAPAEVKEASQPVAGSSVVQCKADTSPDSLPKTQLKTANADNADAKDDHLPVDAEEVEDIIRHLELK.

DRBM domains lie at 1 to 70 (MYKN…ALAR) and 87 to 155 (VYKN…SLRQ). Disordered stretches follow at residues 195–268 (NNPH…SRFP) and 455–496 (EASQ…KDDH). Composition is skewed to polar residues over residues 216–225 (FPQSSHSSYS), 249–263 (AASQ…SPNP), and 473–484 (SPDSLPKTQLKT).

Binds double-stranded RNA. The chain is Double-stranded RNA-binding protein 6 (DRB6) from Oryza sativa subsp. japonica (Rice).